The primary structure comprises 111 residues: WAP four-disulfide core domain protein 12 (111 aa).

A signal peptide spans Met1–Gly23. The region spanning Gly27–Val74 is the WAP domain. 4 disulfide bridges follow: Cys34-Cys62, Cys41-Cys66, Cys49-Cys61, and Cys55-Cys70. Residues Gly80–Lys111 form a disordered region. Over residues Pro101–Lys111 the composition is skewed to polar residues.

It is found in the secreted. Functionally, antibacterial protein. Putative acid-stable proteinase inhibitor. The chain is WAP four-disulfide core domain protein 12 (WFDC12) from Papio anubis (Olive baboon).